The following is a 61-amino-acid chain: Large ribosomal subunit protein uL30 (61 aa).

It belongs to the universal ribosomal protein uL30 family. In terms of assembly, part of the 50S ribosomal subunit.

This is Large ribosomal subunit protein uL30 from Laribacter hongkongensis (strain HLHK9).